The chain runs to 172 residues: Adenine phosphoribosyltransferase (172 aa).

This sequence belongs to the purine/pyrimidine phosphoribosyltransferase family. Homodimer.

Its subcellular location is the cytoplasm. The catalysed reaction is AMP + diphosphate = 5-phospho-alpha-D-ribose 1-diphosphate + adenine. Its pathway is purine metabolism; AMP biosynthesis via salvage pathway; AMP from adenine: step 1/1. In terms of biological role, catalyzes a salvage reaction resulting in the formation of AMP, that is energically less costly than de novo synthesis. The polypeptide is Adenine phosphoribosyltransferase (Clostridium botulinum (strain Alaska E43 / Type E3)).